The following is a 534-amino-acid chain: Low affinity inorganic phosphate transporter 1 (534 aa).

Topologically, residues 1 to 23 (MAKDLQVLTALDVAKTQLYHFTA) are cytoplasmic. A helical membrane pass occupies residues 24-44 (IVIAGMGFFTDAYDLFCISLV). The Extracellular segment spans residues 45–69 (TKLLGRIYYHHEGALKPGSLPPNVA). Residues 70–90 (AAVNGVAFCGTLAGQLFFGWL) traverse the membrane as a helical segment. Over 91-98 (GDKLGRKK) the chain is Cytoplasmic. Residues 99-119 (VYGMTLMLMVICSIASGLSFG) form a helical membrane-spanning segment. Residues 120 to 124 (HTPKS) are Extracellular-facing. A helical membrane pass occupies residues 125-145 (VMATLCFFRFWLGFGIGGDYP). At 146-163 (LSATIMSEYANKKTRGAF) the chain is on the cytoplasmic side. Residues 164–184 (IAAVFAMQGFGILAGGMVAII) form a helical membrane-spanning segment. The Extracellular portion of the chain corresponds to 185 to 210 (VSAAFKNQFPAPAYKDGALASTISQA). The helical transmembrane segment at 211–231 (DFVWRIIVMFGAIPTALTYYW) threads the bilayer. The Cytoplasmic segment spans residues 232 to 290 (RMKMPETARYTALVAKNLKQATNDMSKVLQVEIEPEQEKVEEISQGNDFGLFTKQFLRR). Residues 291-311 (HGLHLLGTASTWFLLDIAFYS) traverse the membrane as a helical segment. Over 312–343 (QNLFQKDIFSAIGWIPPAETMNALEEVYRIAR) the chain is Extracellular. The helical transmembrane segment at 344–364 (AQTLIALCSTVPGYWFTVAFI) threads the bilayer. Over 365–369 (DKIGR) the chain is Cytoplasmic. Residues 370–390 (FAIQLMGFFFMTVFMFALAIP) traverse the membrane as a helical segment. Residues 391 to 400 (YTHWTHKDNR) are Extracellular-facing. The chain crosses the membrane as a helical span at residues 401–421 (IGFVIMYSLTFFFANFGPNAT). Residues 422 to 440 (TFVVPAEIFPARLRSTCHG) are Cytoplasmic-facing. A helical membrane pass occupies residues 441–461 (ISAAAGKAGAMVGAFGFLYAA). Residues 462-481 (QSTDPKKTDAGYPAGIGVRN) are Extracellular-facing. Residues 482–502 (SLIVLGCVNFLGMLFTLLVPE) form a helical membrane-spanning segment. The Cytoplasmic segment spans residues 503–534 (SKGKSLEEMSRENEGEDENGTEMRASGRTVPV). The interval 507–534 (SLEEMSRENEGEDENGTEMRASGRTVPV) is disordered.

This sequence belongs to the major facilitator superfamily. Phosphate:H(+) symporter (TC 2.A.1.9) family.

It localises to the cell membrane. The enzyme catalyses phosphate(in) + H(+)(in) = phosphate(out) + H(+)(out). Its function is as follows. Low-affinity transporter for external inorganic phosphate (Pi). Involved in phosphorus (P) remobilization from dying to developing tissues during corolla senescence in an ethylene-dependent manner. The protein is Low affinity inorganic phosphate transporter 1 of Petunia hybrida (Petunia).